The following is a 92-amino-acid chain: PqqA binding protein (92 aa).

The protein belongs to the PqqD family. As to quaternary structure, monomer. Interacts with PqqE.

It participates in cofactor biosynthesis; pyrroloquinoline quinone biosynthesis. Functionally, functions as a PqqA binding protein and presents PqqA to PqqE, in the pyrroloquinoline quinone (PQQ) biosynthetic pathway. The protein is PqqA binding protein of Klebsiella pneumoniae (strain 342).